The chain runs to 1262 residues: MLQQVPENINFPAEEEKILEFWTEFNCFQECLKQSKHKPKFTFYDGPPFATGLPHYGHILAGTIKDIVTRYAHQSGFHVDRRFGWDCHGLPVEYEIDKTLGIRGPEDVAKMGITEYNNQCRAIVMRYSAEWKSTVSRLGRWIDFDNDYKTLYPQFMESVWWVFKQLYDKGLVYRGVKVMPFSTACNTPLSNFESHQNYKDVQDPSVFVTFPLEEDETVSLVAWTTTPWTLPSNLAVCVNPEMQYVKIKDVARGRLLILMEARLSALYKLESDYEILERFPGAYLKGKKYRPLFDYFLKCKENGAFTVLVDNYVKEEEGTGVVHQAPYFGAEDYRVCMDFNIIRKDSLPVCPVDASGCFTTEVTDFAGQYVKDADKSIIRTLKEQGRLLVATTFTHSYPFCWRSDTPLIYKAVPSWFVRVENMVDQLLRNNDLCYWVPELVREKRFGNWLKDARDWTISRNRYWGTPIPLWVSDDFEEVVCIGSVAELEELSGAKISDLHRESVDHLTIPSRCGKGSLHRISEVFDCWFESGSMPYAQVHYPFENKREFEDAFPADFIAEGIDQTRGWFYTLLVLATALFGQPPFKNVIVNGLVLASDGQKMSKRKKNYPDPVSIIQKYGADALRLYLINSPVVRAENLRFKEEGVRDVLKDVLLPWYNAYRFLIQNVLRLQKEEEIEFLYNENTVRESPNITDRWILSFMQSLIGFFETEMAAYRLYTVVPRLVKFVDILTNWYVRMNRRRLKGENGMEDCVMALETLFSVLLSLCRLMAPYTPFLTELMYQNLKVLIDPVSVQDKDTLSIHYLMLPRVREELIDKKTESAVSQMQSVIELGRVIRDRKTIPIKYPLKEIVVIHQDPEALKDIKSLEKYIIEELNVRKVTLSTDKNKYGIRLRAEPDHMVLGKRLKGAFKAVMTSIKQLSSEELEQFQKTGTIVVEGHELHDEDIRLMYTFDQATGGTAQFEAHSDAQALVLLDVTPDQSMVDEGMAREVINRIQKLRKKCNLVPTDEITVYYKAKSEGTYLNSVIESHTEFIFTTIKAPLKPYPVSPSDKVLIQEKTQLKGSELEITLTRGSSLPGPACAYVNLNICANGSEQGGVLLLENPKGDNRLDLLKLKSVVTSIFGVKNTELAVFHDETEIQNQTDLLSLSGKTLCVTAGSAPSLINSSSTLLCQYINLQLLNAKPQECLMGTVGTLLLENPLGQNGLTHQGLLYEAAKVFGLRSRKLKLFLNETQTQEITEDIPVKTLNMKTVYVSVLPTTADF.

Met1 carries the N-acetylmethionine modification. Positions 48–58 (PFATGLPHYGH) match the 'HIGH' region motif. Positions 600-604 (KMSKR) match the 'KMSKS' region motif. Lys603 is a binding site for ATP. 2 positions are modified to phosphoserine: Ser1047 and Ser1049. At Thr1058 the chain carries Phosphothreonine.

The protein belongs to the class-I aminoacyl-tRNA synthetase family. As to quaternary structure, part of a multisubunit complex that groups tRNA ligases for Arg (RARS1), Asp (DARS1), Gln (QARS1), Ile (IARS1), Leu (LARS1), Lys (KARS1), Met (MARS1) the bifunctional ligase for Glu and Pro (EPRS1) and the auxiliary subunits AIMP1/p43, AIMP2/p38 and EEF1E1/p18. As to expression, expressed in liver and muscle (at protein level).

The protein resides in the cytoplasm. The protein localises to the cytosol. The enzyme catalyses tRNA(Ile) + L-isoleucine + ATP = L-isoleucyl-tRNA(Ile) + AMP + diphosphate. In terms of biological role, catalyzes the specific attachment of an amino acid to its cognate tRNA in a 2 step reaction: the amino acid (AA) is first activated by ATP to form AA-AMP and then transferred to the acceptor end of the tRNA. This chain is Isoleucine--tRNA ligase, cytoplasmic, found in Homo sapiens (Human).